A 589-amino-acid chain; its full sequence is UvrABC system protein C (589 aa).

The GIY-YIG domain occupies 13–90; the sequence is PNPGCYLFKN…IKTHTPKYNF (78 aa). The UVR domain occupies 194–229; sequence KDILKKLHHLMQKASEKMFYEKAQEYRDIIDSIKQT.

Belongs to the UvrC family. In terms of assembly, interacts with UvrB in an incision complex.

The protein localises to the cytoplasm. Its function is as follows. The UvrABC repair system catalyzes the recognition and processing of DNA lesions. UvrC both incises the 5' and 3' sides of the lesion. The N-terminal half is responsible for the 3' incision and the C-terminal half is responsible for the 5' incision. The chain is UvrABC system protein C from Aster yellows witches'-broom phytoplasma (strain AYWB).